A 587-amino-acid polypeptide reads, in one-letter code: Protoheme IX farnesyltransferase (587 aa).

A unknown region spans residues 1–317; it reads MAARSLMRIL…ISLTKPKVIS (317 aa). 16 consecutive transmembrane segments (helical) span residues 9–29, 58–78, 93–113, 123–143, 172–192, 195–215, 238–258, 260–280, 315–335, 337–357, 386–406, 409–429, 437–457, 464–484, 522–542, and 560–580; these read ILLVGLGLTLATIISGALVTI, LLHRLFVALALLAVFAGLVAV, GIAAAFFLLQALAGALLVWGV, LSGALLAFGAQSLTIALIAVP, AAGVAALAIGARSVVPGFGMM, VPTNSVSAVGFAALLSVWMAL, SLFLPALALLALLGAFIPVAG, LISLTAIALLWAATIIAAVIL, VISLLLVTTLTTMFITEAGLP, WWLVIWTMIGGYLAAGGAGAI, AAFIFGLILSVLSIIVLWVFT, LAAFFALLGIIYYAWFYTGWL, IIIGGGAGAIPPLVGWTAVTG, VVLFAIIFYWTPPHFWALALV, LLPVAIGAMSWIYLIGAVVLG, and AIWGLYKYSLLYLALVFAAMV. A protoheme IX prenyltransferase region spans residues 318 to 587; it reads LLLVTTLTTM…AMVADRLIIG (270 aa).

This sequence in the C-terminal section; belongs to the UbiA prenyltransferase family. Protoheme IX farnesyltransferase subfamily.

The protein localises to the cell membrane. It catalyses the reaction heme b + (2E,6E)-farnesyl diphosphate + H2O = Fe(II)-heme o + diphosphate. It participates in porphyrin-containing compound metabolism; heme O biosynthesis; heme O from protoheme: step 1/1. Functionally, converts heme B (protoheme IX) to heme O by substitution of the vinyl group on carbon 2 of heme B porphyrin ring with a hydroxyethyl farnesyl side group. The polypeptide is Protoheme IX farnesyltransferase (ctaB) (Chloroflexus aurantiacus (strain ATCC 29366 / DSM 635 / J-10-fl)).